The sequence spans 316 residues: tRNA uridine(34) hydroxylase (316 aa).

A Rhodanese domain is found at 136–230 (ADENTVVVDK…YLEEVPREQS (95 aa)). Cys190 serves as the catalytic Cysteine persulfide intermediate.

The protein belongs to the TrhO family.

It catalyses the reaction uridine(34) in tRNA + AH2 + O2 = 5-hydroxyuridine(34) in tRNA + A + H2O. Its function is as follows. Catalyzes oxygen-dependent 5-hydroxyuridine (ho5U) modification at position 34 in tRNAs. This Brucella abortus (strain 2308) protein is tRNA uridine(34) hydroxylase.